Reading from the N-terminus, the 104-residue chain is L-rhamnose mutarotase (104 aa).

Position 18 (Tyr-18) interacts with substrate. His-22 (proton donor) is an active-site residue. Residues Tyr-41 and 76 to 77 (WW) contribute to the substrate site.

Belongs to the rhamnose mutarotase family. As to quaternary structure, homodimer.

Its subcellular location is the cytoplasm. The catalysed reaction is alpha-L-rhamnose = beta-L-rhamnose. Its pathway is carbohydrate metabolism; L-rhamnose metabolism. Its function is as follows. Involved in the anomeric conversion of L-rhamnose. This chain is L-rhamnose mutarotase, found in Escherichia coli O1:K1 / APEC.